The sequence spans 311 residues: Small ribosomal subunit biogenesis GTPase RsgA (311 aa).

Residues 77–239 (LSKQSHIIAT…IIDTPGIKGF (163 aa)) enclose the CP-type G domain. GTP contacts are provided by residues 126 to 129 (NKTD) and 180 to 188 (GHSGVGKST). Zn(2+) contacts are provided by C263, C268, H270, and C276.

It belongs to the TRAFAC class YlqF/YawG GTPase family. RsgA subfamily. Monomer. Associates with 30S ribosomal subunit, binds 16S rRNA. Requires Zn(2+) as cofactor.

Its subcellular location is the cytoplasm. Its function is as follows. One of several proteins that assist in the late maturation steps of the functional core of the 30S ribosomal subunit. Helps release RbfA from mature subunits. May play a role in the assembly of ribosomal proteins into the subunit. Circularly permuted GTPase that catalyzes slow GTP hydrolysis, GTPase activity is stimulated by the 30S ribosomal subunit. This chain is Small ribosomal subunit biogenesis GTPase RsgA, found in Azobacteroides pseudotrichonymphae genomovar. CFP2.